The chain runs to 441 residues: Serine carboxypeptidase-like 2 (441 aa).

Residues 1 to 29 (MANKYFSSVLKSLLLLLHLVFLSKQHVDS) form the signal peptide. 3 disulfides stabilise this stretch: cysteine 88-cysteine 331, cysteine 252-cysteine 266, and cysteine 290-cysteine 297. The N-linked (GlcNAc...) asparagine glycan is linked to asparagine 109. Serine 184 is an active-site residue. N-linked (GlcNAc...) asparagine glycosylation is present at asparagine 350. The active site involves aspartate 366. N-linked (GlcNAc...) asparagine glycosylation occurs at asparagine 382. The active site involves histidine 419.

This sequence belongs to the peptidase S10 family. Expressed in seedlings and roots.

Its subcellular location is the secreted. Probable carboxypeptidase. This is Serine carboxypeptidase-like 2 (SCPL2) from Arabidopsis thaliana (Mouse-ear cress).